The primary structure comprises 323 residues: Protoheme IX farnesyltransferase (323 aa).

Transmembrane regions (helical) follow at residues 50-70, 97-117, 118-138, 150-170, 184-204, 231-248, 252-274, and 293-313; these read IVLI…ANTF, NRDA…WLWL, LCDS…YIFV, NIVW…AVIV, AIVL…ALAM, IVWY…LIPA, IYAA…LHLG, and YLAV…ETIG.

It belongs to the UbiA prenyltransferase family. Protoheme IX farnesyltransferase subfamily.

The protein resides in the cell membrane. The enzyme catalyses heme b + (2E,6E)-farnesyl diphosphate + H2O = Fe(II)-heme o + diphosphate. It functions in the pathway porphyrin-containing compound metabolism; heme O biosynthesis; heme O from protoheme: step 1/1. Converts heme B (protoheme IX) to heme O by substitution of the vinyl group on carbon 2 of heme B porphyrin ring with a hydroxyethyl farnesyl side group. The polypeptide is Protoheme IX farnesyltransferase (Corynebacterium glutamicum (strain R)).